The following is a 156-amino-acid chain: Ribosomal RNA large subunit methyltransferase H (156 aa).

Residues Leu-73, Gly-104, and 123–128 (LSALTL) each bind S-adenosyl-L-methionine.

It belongs to the RNA methyltransferase RlmH family. Homodimer.

It is found in the cytoplasm. It catalyses the reaction pseudouridine(1915) in 23S rRNA + S-adenosyl-L-methionine = N(3)-methylpseudouridine(1915) in 23S rRNA + S-adenosyl-L-homocysteine + H(+). Specifically methylates the pseudouridine at position 1915 (m3Psi1915) in 23S rRNA. The polypeptide is Ribosomal RNA large subunit methyltransferase H (Shewanella pealeana (strain ATCC 700345 / ANG-SQ1)).